The sequence spans 181 residues: MGRTTSSPKAMMRIATVAAILTILASTCMARNVLTNGEGLYAGQSLDVEQYKFIMQDDCNLVLYEYSTPIWASNTGVTGKNGCRAVMQRDGNFVVYDVNGRPVWASNSVRGNGNYILVLQKDRNVVIYGSDIWSTGTYRRSVGGAVVMAMNGTVDGGSVIGPVVVNQNVTAAIRKVGTGAA.

The first 30 residues, 1 to 30 (MGRTTSSPKAMMRIATVAAILTILASTCMA), serve as a signal peptide directing secretion. The Bulb-type lectin domain occupies 31 to 140 (RNVLTNGEGL…DIWSTGTYRR (110 aa)). Residues Q56, D58, N60, Y64, W71, A72, N74, Q88, D90, N92, Y96, V103, W104, N107, N114, Q120, D122, N124, Y128, and W133 each coordinate alpha-D-mannopyranose. A disulfide bond links C59 and C83.

As to quaternary structure, homodimer.

The protein resides in the secreted. Its function is as follows. Mannose-specific lectin. Shows agglutinating activity towards rabbit erythrocytes. However, it does not show agglutinating activity towards human erythrocytes. Has insecticidal activity against the cotton leafworm S.littoralis and the peach potato aphid M.persicae. Also displays antiviral activity and therefore may contribute to defense against infections. In Allium sativum (Garlic), this protein is Mannose-specific lectin.